The primary structure comprises 348 residues: tRNA-specific 2-thiouridylase MnmA (348 aa).

ATP-binding positions include 8–15 (LLSGGVDS) and Met34. The active-site Nucleophile is the Cys105. Residues Cys105 and Cys197 are joined by a disulfide bond. Residue Gly129 participates in ATP binding. The interaction with tRNA stretch occupies residues 147 to 149 (KDQ). Catalysis depends on Cys197, which acts as the Cysteine persulfide intermediate.

It belongs to the MnmA/TRMU family.

The protein resides in the cytoplasm. The enzyme catalyses S-sulfanyl-L-cysteinyl-[protein] + uridine(34) in tRNA + AH2 + ATP = 2-thiouridine(34) in tRNA + L-cysteinyl-[protein] + A + AMP + diphosphate + H(+). Catalyzes the 2-thiolation of uridine at the wobble position (U34) of tRNA, leading to the formation of s(2)U34. The chain is tRNA-specific 2-thiouridylase MnmA from Fervidobacterium nodosum (strain ATCC 35602 / DSM 5306 / Rt17-B1).